The chain runs to 340 residues: Dihydroorotate dehydrogenase (quinone) (340 aa).

Residues 61–65 (AGLDK) and Thr85 each bind FMN. Lys65 lines the substrate pocket. Substrate is bound at residue 110-114 (NRMGF). FMN contacts are provided by Asn138 and Asn171. Residue Asn171 participates in substrate binding. Residue Ser174 is the Nucleophile of the active site. Residue Asn176 participates in substrate binding. Lys216 and Thr244 together coordinate FMN. 245-246 (NT) is a binding site for substrate. Residues Gly267, Gly296, and 317–318 (YT) each bind FMN.

The protein belongs to the dihydroorotate dehydrogenase family. Type 2 subfamily. In terms of assembly, monomer. FMN serves as cofactor.

The protein resides in the cell membrane. The catalysed reaction is (S)-dihydroorotate + a quinone = orotate + a quinol. Its pathway is pyrimidine metabolism; UMP biosynthesis via de novo pathway; orotate from (S)-dihydroorotate (quinone route): step 1/1. Functionally, catalyzes the conversion of dihydroorotate to orotate with quinone as electron acceptor. The chain is Dihydroorotate dehydrogenase (quinone) from Marinobacter nauticus (strain ATCC 700491 / DSM 11845 / VT8) (Marinobacter aquaeolei).